The primary structure comprises 284 residues: Acetylglutamate kinase (284 aa).

Substrate contacts are provided by residues 66-67 (GG), R88, and N179.

The protein belongs to the acetylglutamate kinase family. ArgB subfamily.

The protein localises to the cytoplasm. It carries out the reaction N-acetyl-L-glutamate + ATP = N-acetyl-L-glutamyl 5-phosphate + ADP. The protein operates within amino-acid biosynthesis; L-arginine biosynthesis; N(2)-acetyl-L-ornithine from L-glutamate: step 2/4. In terms of biological role, catalyzes the ATP-dependent phosphorylation of N-acetyl-L-glutamate. The chain is Acetylglutamate kinase from Actinobacillus pleuropneumoniae serotype 5b (strain L20).